We begin with the raw amino-acid sequence, 291 residues long: MELAEFWNDLNTFTIYGPNHTDMTTKYKYSYHFPGEQVADPQYWTILFQKYWYHSITISVLYFILIKVIQKFMENRKPFTLKYPLILWNGALAAFSIIATLRFSIDPLRSLYAEGFYKTLCYSCNPTDVAAFWSFAFALSKIVELGDTMFIILRKRPLIFLHYYHHAAVLIYTVHSGAEHTAAGRFYILMNYFAHSLMYTYYTVSAMGYRLPKWVSMTVTTVQTTQMLAGVGITWMVYKVKTEYKLPCQQSVANLYLAFVIYVTFAILFIQFFVKAYIIKSSKKSKSVKNE.

The next 3 membrane-spanning stretches (helical) occupy residues 46–66 (ILFQ…FILI), 79–99 (FTLK…SIIA), and 254–274 (NLYL…QFFV).

This sequence belongs to the ELO family.

The protein localises to the membrane. It catalyses the reaction a very-long-chain acyl-CoA + malonyl-CoA + H(+) = a very-long-chain 3-oxoacyl-CoA + CO2 + CoA. Its pathway is lipid metabolism; fatty acid biosynthesis. Functionally, could be implicated in synthesis of very long chain fatty acids. In Caenorhabditis elegans, this protein is Putative fatty acid elongase 4 (elo-4).